A 37-amino-acid chain; its full sequence is Large ribosomal subunit protein bL36 (37 aa).

Belongs to the bacterial ribosomal protein bL36 family.

The protein is Large ribosomal subunit protein bL36 of Hydrogenobaculum sp. (strain Y04AAS1).